Consider the following 425-residue polypeptide: Serine hydroxymethyltransferase (425 aa).

(6S)-5,6,7,8-tetrahydrofolate contacts are provided by residues Leu124 and 128–130; that span reads GHL. An N6-(pyridoxal phosphate)lysine modification is found at Lys233.

This sequence belongs to the SHMT family. Homodimer. The cofactor is pyridoxal 5'-phosphate.

Its subcellular location is the cytoplasm. The enzyme catalyses (6R)-5,10-methylene-5,6,7,8-tetrahydrofolate + glycine + H2O = (6S)-5,6,7,8-tetrahydrofolate + L-serine. The protein operates within one-carbon metabolism; tetrahydrofolate interconversion. It functions in the pathway amino-acid biosynthesis; glycine biosynthesis; glycine from L-serine: step 1/1. In terms of biological role, catalyzes the reversible interconversion of serine and glycine with tetrahydrofolate (THF) serving as the one-carbon carrier. This reaction serves as the major source of one-carbon groups required for the biosynthesis of purines, thymidylate, methionine, and other important biomolecules. Also exhibits THF-independent aldolase activity toward beta-hydroxyamino acids, producing glycine and aldehydes, via a retro-aldol mechanism. This chain is Serine hydroxymethyltransferase, found in Clavibacter michiganensis subsp. michiganensis (strain NCPPB 382).